Reading from the N-terminus, the 251-residue chain is Zinc import ATP-binding protein ZnuC (251 aa).

One can recognise an ABC transporter domain in the interval 5–220; sequence VSLENVSVSF…PEFISMFGPR (216 aa). 37–44 lines the ATP pocket; the sequence is GPNGAGKS.

This sequence belongs to the ABC transporter superfamily. Zinc importer (TC 3.A.1.15.5) family. The complex is composed of two ATP-binding proteins (ZnuC), two transmembrane proteins (ZnuB) and a solute-binding protein (ZnuA).

It localises to the cell inner membrane. The enzyme catalyses Zn(2+)(out) + ATP(in) + H2O(in) = Zn(2+)(in) + ADP(in) + phosphate(in) + H(+)(in). In terms of biological role, part of the ABC transporter complex ZnuABC involved in zinc import. Responsible for energy coupling to the transport system. The sequence is that of Zinc import ATP-binding protein ZnuC from Salmonella typhi.